We begin with the raw amino-acid sequence, 201 residues long: Ras-related protein Rab-9B (201 aa).

GTP-binding residues include Val18, Gly19, Lys20, Ser21, Ser22, Asp33, Ser34, Ala36, His38, and Thr39. Position 21 (Ser21) interacts with Mg(2+). The Switch 1 motif lies at Lys31–Val42. Phosphoserine is present on Ser34. Mg(2+) is bound by residues Thr39 and Asp62. The Switch 2 signature appears at Ala64–Arg78. Residues Gly65, Asn124, Lys125, Ala155, and Lys156 each coordinate GTP. S-geranylgeranyl cysteine attachment occurs at residues Cys200 and Cys201.

It belongs to the small GTPase superfamily. Rab family. In terms of assembly, interacts (GTP-bound form) with SGSM1; the GDP-bound form has much lower affinity for SGSM1. The GTP-bound form but not the GDP-bound form interacts with HPS4 and the BLOC-3 complex (heterodimer of HPS1 and HPS4) but does not interact with HPS1 alone. Interacts (GTP-bound form) with NDE1. Mg(2+) is required as a cofactor.

Its subcellular location is the cell membrane. The protein localises to the cytoplasmic vesicle. The protein resides in the phagosome membrane. It catalyses the reaction GTP + H2O = GDP + phosphate + H(+). Its activity is regulated as follows. Regulated by guanine nucleotide exchange factors (GEFs) which promote the exchange of bound GDP for free GTP. Regulated by GTPase activating proteins (GAPs) which increase the GTP hydrolysis activity. Inhibited by GDP dissociation inhibitors (GDIs). In terms of biological role, the small GTPases Rab are key regulators of intracellular membrane trafficking, from the formation of transport vesicles to their fusion with membranes. Rabs cycle between an inactive GDP-bound form and an active GTP-bound form that is able to recruit to membranes different sets of downstream effectors directly responsible for vesicle formation, movement, tethering and fusion. RAB9B is involved in the transport of proteins between the endosomes and the trans Golgi network. May use NDE1/NDEL1 as an effector to interact with the dynein motor complex in order to control retrograde trafficking of RAB9-associated late endosomes to the TGN. In Mus musculus (Mouse), this protein is Ras-related protein Rab-9B.